The primary structure comprises 410 residues: Metal tolerance protein 3 (410 aa).

The segment at 1–58 is disordered; it reads MDGDDRRTPLLGGEGGSTRPPSLRRRDSARSLRSTFLSRLPDKVRGGGDPERPAADVD. At 1–114 the chain is on the cytoplasmic side; it reads MDGDDRRTPL…EDKEQKQSES (114 aa). Basic and acidic residues predominate over residues 40–58; sequence LPDKVRGGGDPERPAADVD. The chain crosses the membrane as a helical span at residues 115–135; sequence AMKISNYANIILLVFKVYATI. The Vacuolar portion of the chain corresponds to 136 to 140; the sequence is KTGSM. The helical transmembrane segment at 141–161 threads the bilayer; sequence AIAASTLDSLLDFLAGGILYF. At 162 to 184 the chain is on the cytoplasmic side; that stretch reads THLTMKSVNIYKYPIGKLRVQPV. Residues 185 to 205 traverse the membrane as a helical segment; sequence GIIVFAAIMATLGFQVLIQAI. At 206 to 221 the chain is on the vacuolar side; the sequence is EQLVENKAGEKMTPEQ. A helical transmembrane segment spans residues 222 to 242; that stretch reads LIWLYSIMLSATVVKLALYIY. Residues 243–258 are Cytoplasmic-facing; sequence CRSSGNSIVQAYAKDH. A helical transmembrane segment spans residues 259–275; that stretch reads YFDVVTNVVGLVAAVLG. At 276–284 the chain is on the vacuolar side; sequence DKFFWWIDP. The helical transmembrane segment at 285 to 303 threads the bilayer; that stretch reads VGAVLLAVYTIVNWSGTVY. The Cytoplasmic portion of the chain corresponds to 304 to 410; it reads ENAVTLVGQC…VRSRLPSTEP (107 aa).

Belongs to the cation diffusion facilitator (CDF) transporter (TC 2.A.4) family. SLC30A subfamily.

It is found in the vacuole membrane. In terms of biological role, involved in sequestration of excess metal in the cytoplasm into vacuoles to maintain metal homeostasis. This is Metal tolerance protein 3 (MTP3) from Oryza sativa subsp. japonica (Rice).